We begin with the raw amino-acid sequence, 215 residues long: UPF0441 protein SG0265 (215 aa).

This sequence belongs to the UPF0441 family.

This Sodalis glossinidius (strain morsitans) protein is UPF0441 protein SG0265.